Here is a 345-residue protein sequence, read N- to C-terminus: S-adenosylmethionine:tRNA ribosyltransferase-isomerase (345 aa).

It belongs to the QueA family. As to quaternary structure, monomer.

It is found in the cytoplasm. It catalyses the reaction 7-aminomethyl-7-carbaguanosine(34) in tRNA + S-adenosyl-L-methionine = epoxyqueuosine(34) in tRNA + adenine + L-methionine + 2 H(+). Its pathway is tRNA modification; tRNA-queuosine biosynthesis. Its function is as follows. Transfers and isomerizes the ribose moiety from AdoMet to the 7-aminomethyl group of 7-deazaguanine (preQ1-tRNA) to give epoxyqueuosine (oQ-tRNA). The polypeptide is S-adenosylmethionine:tRNA ribosyltransferase-isomerase (Helicobacter acinonychis (strain Sheeba)).